We begin with the raw amino-acid sequence, 610 residues long: Autophagy-related protein 22-1 (610 aa).

Positions 1 to 11 (MAFTPSSPPSP) are enriched in pro residues. A disordered region spans residues 1–29 (MAFTPSSPPSPAADASQRPSRYPGEDTTP). The helical transmembrane segment at 35 to 55 (ILGWYAYGIAAEVFAVCGVGS) threads the bilayer. N-linked (GlcNAc...) asparagine glycosylation occurs at Asn90. 3 helical membrane passes run 120–140 (SFAM…LISF), 152–171 (TLLL…FVFV), and 189–209 (CLGS…ANDP). The disordered stretch occupies residues 229-265 (GQFEPRDSFSERNPEFESQYTPGIGLGSKPSTNATSP). A compositionally biased stretch (basic and acidic residues) spans 232–243 (EPRDSFSERNPE). Asn261 carries an N-linked (GlcNAc...) asparagine glycan. 8 helical membrane passes run 278-298 (VGLG…LLFA), 310-330 (TLPL…FTMV), 384-404 (VFLV…GTAI), 418-438 (VGCL…LWPV), 453-473 (LCIA…IPLF), 488-510 (FPLA…SFFG), 522-544 (YALY…GMLI), and 553-573 (GFFF…MVNA). Residues 588–610 (AKGQESETGEPGEEAEGLLARGA) are disordered. A compositionally biased stretch (acidic residues) spans 594–603 (ETGEPGEEAE).

This sequence belongs to the ATG22 family.

The protein resides in the vacuole membrane. In terms of biological role, vacuolar effluxer which mediate the efflux of amino acids resulting from autophagic degradation. The release of autophagic amino acids allows the maintenance of protein synthesis and viability during nitrogen starvation. This is Autophagy-related protein 22-1 (atg22-1) from Aspergillus terreus (strain NIH 2624 / FGSC A1156).